The following is a 523-amino-acid chain: Pentatricopeptide repeat-containing protein At1g52640, mitochondrial (523 aa).

The transit peptide at Met-1–Thr-5 directs the protein to the mitochondrion. 10 PPR repeats span residues Ser-101 to Glu-135, Ser-137 to Pro-171, Cys-172 to Pro-206, Ser-207 to Val-241, Asp-242 to Pro-276, Asp-277 to Pro-311, Asn-312 to Pro-346, Asp-347 to Pro-381, Asp-382 to Pro-416, and Thr-417 to Pro-452. The disordered stretch occupies residues Lys-498–Ile-523. Residues Ser-509–Ile-523 show a composition bias toward acidic residues.

This sequence belongs to the PPR family. P subfamily.

The protein resides in the mitochondrion. This chain is Pentatricopeptide repeat-containing protein At1g52640, mitochondrial, found in Arabidopsis thaliana (Mouse-ear cress).